Reading from the N-terminus, the 117-residue chain is Immunoglobulin heavy variable 1-69 (117 aa).

Residues 1–19 (MDWTWRFLFVVAAATGVQS) form the signal peptide. Glutamine 20 is modified (pyrrolidone carboxylic acid). A framework-1 region spans residues 20–44 (QVQLVQSGAEVKKPGSSVKVSCKAS). Positions 20–117 (QVQLVQSGAE…EDTAVYYCAR (98 aa)) constitute an Ig-like domain. A disulfide bond links cysteine 41 and cysteine 115. Residues 45 to 52 (GGTFSSYA) form a complementarity-determining-1 region. Positions 53-69 (ISWVRQAPGQGLEWMGG) are framework-2. Residues 70-77 (IIPIFGTA) form a complementarity-determining-2 region. A framework-3 region spans residues 78 to 115 (NYAQKFQGRVTITADKSTSTAYMELSSLRSEDTAVYYC). The segment at 116-117 (AR) is complementarity-determining-3.

In terms of assembly, immunoglobulins are composed of two identical heavy chains and two identical light chains; disulfide-linked.

The protein resides in the secreted. The protein localises to the cell membrane. Its function is as follows. V region of the variable domain of immunoglobulin heavy chains that participates in the antigen recognition. Immunoglobulins, also known as antibodies, are membrane-bound or secreted glycoproteins produced by B lymphocytes. In the recognition phase of humoral immunity, the membrane-bound immunoglobulins serve as receptors which, upon binding of a specific antigen, trigger the clonal expansion and differentiation of B lymphocytes into immunoglobulins-secreting plasma cells. Secreted immunoglobulins mediate the effector phase of humoral immunity, which results in the elimination of bound antigens. The antigen binding site is formed by the variable domain of one heavy chain, together with that of its associated light chain. Thus, each immunoglobulin has two antigen binding sites with remarkable affinity for a particular antigen. The variable domains are assembled by a process called V-(D)-J rearrangement and can then be subjected to somatic hypermutations which, after exposure to antigen and selection, allow affinity maturation for a particular antigen. The chain is Immunoglobulin heavy variable 1-69 from Homo sapiens (Human).